Here is a 177-residue protein sequence, read N- to C-terminus: Large ribosomal subunit protein uL6 (177 aa).

Belongs to the universal ribosomal protein uL6 family. Part of the 50S ribosomal subunit.

Functionally, this protein binds to the 23S rRNA, and is important in its secondary structure. It is located near the subunit interface in the base of the L7/L12 stalk, and near the tRNA binding site of the peptidyltransferase center. In Ralstonia pickettii (strain 12J), this protein is Large ribosomal subunit protein uL6.